A 311-amino-acid polypeptide reads, in one-letter code: MAVLLRDKHISYLHDIGNRTDELDFWLKEHLHVSAIYWSCMSFWLLKKKDQIDKERIVSFLLSCLTESGGFACYPGHDDHITNTVYAVQVLAMLDSLHVVDKDKVASYIIGLQNEDGSMKGDRWGEIDARFLYSGINCLAILGKLDYLNKNTAVDWLMKCYNFDGGFGLCPGAESHGAMVFTCVAALKILNKLDLIDEELLGWWISERQVKGGGLNGRPEKLPDSCYGWWDLSPLAIIGKLDWIDRNQLIDFLLGTQDADSGGFADRKEDATDVYHTCFSLAGLSLLQFPNIEPVDPRFCLPLEVTQKMKL.

PFTB repeat units lie at residues Lys-54–Asp-95, Lys-102–Gly-143, Lys-150–Asn-191, Asp-197–Gly-239, and Arg-246–Gln-288. Geranylgeranyl diphosphate-binding positions include His-176–Ala-178 and Arg-218–Trp-230. Residues Asp-224, Cys-226, and His-276 each coordinate Zn(2+).

This sequence belongs to the protein prenyltransferase subunit beta family. Heterodimer of an alpha and a beta subunit. Requires Zn(2+) as cofactor.

It catalyses the reaction geranylgeranyl diphosphate + L-cysteinyl-[protein] = S-geranylgeranyl-L-cysteinyl-[protein] + diphosphate. In terms of biological role, catalyzes the transfer of a geranyl-geranyl moiety from geranyl-geranyl pyrophosphate to proteins having the C-terminal -XCC or -XCXC, where both cysteines may become modified. The chain is Geranylgeranyl transferase type-2 subunit beta (ptb1) from Schizosaccharomyces pombe (strain 972 / ATCC 24843) (Fission yeast).